The sequence spans 361 residues: MSQNSLRLVEDKSVDKSKALEAALSQIERSFGKGSIMKLGSNENVIEIETISTGSLGLDIALGVGGLPKGRIIEIYGPESSGKTTLALQTIAESQKKGGICAFVDAEHALDPVYARKLGVDLQNLLISQPDTGEQALEITDTLVRSGAVDVLVVDSVAALTPRAEIEGEMGDSLPGLQARLMSQALRKLTASISKSNTMVIFINQIRMKIGVMFGSPETTTGGNALKFYASVRLDIRRIGSVKEREEVIGNQTRVKVVKNKMAPPFKQVEFDIMYGEGVSKTGELVDLGVKAGIVEKSGAWFSYNSQRLGQGGENAKTFLRDNPDLAREIELALRENAGLIADRFLQNGGPDADDGDGADM.

Position 77–84 (G77–T84) interacts with ATP.

It belongs to the RecA family.

It is found in the cytoplasm. Functionally, can catalyze the hydrolysis of ATP in the presence of single-stranded DNA, the ATP-dependent uptake of single-stranded DNA by duplex DNA, and the ATP-dependent hybridization of homologous single-stranded DNAs. It interacts with LexA causing its activation and leading to its autocatalytic cleavage. This is Protein RecA from Rhizobium etli.